We begin with the raw amino-acid sequence, 1640 residues long: RING finger protein 17 (1640 aa).

The segment at 30 to 73 (CTRCGRKVSVASGDHHKFPCGHAFCELCLLAPQEYTTSKCTDCE) adopts an RING-type zinc-finger fold. S134 is modified (phosphoserine). At K229 the chain carries N6-acetyllysine. Disordered regions lie at residues 348 to 376 (TDET…TKEM) and 413 to 435 (DDPI…APVG). The segment covering 360 to 373 (APDRHLEGKKKQPT) has biased composition (basic and acidic residues). Tudor domains lie at 751–809 (CPLQ…FLEP) and 985–1044 (KWEC…LKTM). Residues 1170–1184 (NEHKVPDSKGKKSES) are compositionally biased toward basic and acidic residues. Residues 1170–1191 (NEHKVPDSKGKKSESRSTGCYR) form a disordered region. 2 Tudor domains span residues 1246–1303 (SWKK…PDTP) and 1496–1556 (DFSS…LMQY).

As to quaternary structure, interacts with MXD1, MXD3, MXD4, MXI1 and PIWIL1. Self-associates. As to expression, expressed at high levels in adult testis. Expressed in male germ cells (at protein level). Expressed at lower levels in adult thyroid, submaxillary gland, ovary and epididymis.

It is found in the cytoplasm. The protein localises to the nucleus. Its function is as follows. Seems to be involved in regulation of transcriptional activity of MYC. In vitro, inhibits DNA-binding activity of Mad-MAX heterodimers. Can recruit Mad transcriptional repressors (MXD1, MXD3, MXD4 and MXI1) to the cytoplasm. May be involved in spermiogenesis. The chain is RING finger protein 17 (Rnf17) from Mus musculus (Mouse).